The chain runs to 288 residues: Nucleotide-binding protein Gura_2968 (288 aa).

8–15 (GLSGSGKS) is a binding site for ATP. Residue 59–62 (DIRG) coordinates GTP.

The protein belongs to the RapZ-like family.

Functionally, displays ATPase and GTPase activities. The polypeptide is Nucleotide-binding protein Gura_2968 (Geotalea uraniireducens (strain Rf4) (Geobacter uraniireducens)).